We begin with the raw amino-acid sequence, 155 residues long: Endoribonuclease YbeY (155 aa).

Positions 117, 121, and 127 each coordinate Zn(2+).

Belongs to the endoribonuclease YbeY family. Zn(2+) serves as cofactor.

It is found in the cytoplasm. Its function is as follows. Single strand-specific metallo-endoribonuclease involved in late-stage 70S ribosome quality control and in maturation of the 3' terminus of the 16S rRNA. The protein is Endoribonuclease YbeY of Psychrobacter cryohalolentis (strain ATCC BAA-1226 / DSM 17306 / VKM B-2378 / K5).